A 744-amino-acid chain; its full sequence is Elongation factor G, mitochondrial (744 aa).

The N-terminal 25 residues, 1–25 (MTISCLLRIRPALAKSFFENGQRAF), are a transit peptide targeting the mitochondrion. One can recognise a tr-type G domain in the interval 38-315 (ERIRNIGISA…AVLDYLPNPG (278 aa)). Residues 47–54 (AHIDSGKT), 114–118 (DTPGH), and 168–171 (NKLD) each bind GTP.

This sequence belongs to the TRAFAC class translation factor GTPase superfamily. Classic translation factor GTPase family. EF-G/EF-2 subfamily.

The protein resides in the mitochondrion. Its pathway is protein biosynthesis; polypeptide chain elongation. Mitochondrial GTPase that catalyzes the GTP-dependent ribosomal translocation step during translation elongation. During this step, the ribosome changes from the pre-translocational (PRE) to the post-translocational (POST) state as the newly formed A-site-bound peptidyl-tRNA and P-site-bound deacylated tRNA move to the P and E sites, respectively. Catalyzes the coordinated movement of the two tRNA molecules, the mRNA and conformational changes in the ribosome. This Culex quinquefasciatus (Southern house mosquito) protein is Elongation factor G, mitochondrial.